The following is a 278-amino-acid chain: tRNA pseudouridine synthase A (278 aa).

Residue D51 is the Nucleophile of the active site. Y109 contributes to the substrate binding site.

This sequence belongs to the tRNA pseudouridine synthase TruA family. In terms of assembly, homodimer.

It catalyses the reaction uridine(38/39/40) in tRNA = pseudouridine(38/39/40) in tRNA. Its function is as follows. Formation of pseudouridine at positions 38, 39 and 40 in the anticodon stem and loop of transfer RNAs. The chain is tRNA pseudouridine synthase A from Paracidovorax citrulli (strain AAC00-1) (Acidovorax citrulli).